The following is a 59-amino-acid chain: Large ribosomal subunit protein bL32 (59 aa).

This sequence belongs to the bacterial ribosomal protein bL32 family.

This chain is Large ribosomal subunit protein bL32, found in Rhizorhabdus wittichii (strain DSM 6014 / CCUG 31198 / JCM 15750 / NBRC 105917 / EY 4224 / RW1) (Sphingomonas wittichii).